Reading from the N-terminus, the 291-residue chain is MKKFVIFTDSAADLPKSMVKDLDINYLGLICNIDNTEYIDNIDSELTPKAFYNKLREGIMPSTSQVNSFRFVEAFEEYVKQGISILYLAFSSALSGTYNSSLIAREELLEKYPDADIKIVDTRAACLGQGLLVYYAAQMKKDGKSIDEIYSWVEENKNKLCHYFTVDSLDHLKRGGRISSTAAAIGSLLSIKPMLYVNDAGELHNFAKAKGRKKSLKMLFQELEKRIVNPNEQTIFIAHSDCVEDAETLAEMIREKYPVKDILIDYIGIVIGSHTGIGTLAVFFLGDTKEP.

One can recognise a DegV domain in the interval 4–286 (FVIFTDSAAD…IGTLAVFFLG (283 aa)). The hexadecanoate site is built by T63 and S95.

Functionally, may bind long-chain fatty acids, such as palmitate, and may play a role in lipid transport or fatty acid metabolism. The chain is DegV domain-containing protein CPE0026 from Clostridium perfringens (strain 13 / Type A).